The primary structure comprises 191 residues: Cytochrome c biogenesis ATP-binding export protein CcmA (191 aa).

Residues 2–190 form the ABC transporter domain; sequence LSLHQLQFKN…SIKSAQILRI (189 aa). 29 to 36 contributes to the ATP binding site; that stretch reads GANGCGKS.

This sequence belongs to the ABC transporter superfamily. CcmA exporter (TC 3.A.1.107) family. As to quaternary structure, the complex is composed of two ATP-binding proteins (CcmA) and two transmembrane proteins (CcmB).

It localises to the cell inner membrane. It catalyses the reaction heme b(in) + ATP + H2O = heme b(out) + ADP + phosphate + H(+). In terms of biological role, part of the ABC transporter complex CcmAB involved in the biogenesis of c-type cytochromes; once thought to export heme, this seems not to be the case, but its exact role is uncertain. Responsible for energy coupling to the transport system. The chain is Cytochrome c biogenesis ATP-binding export protein CcmA from Rickettsia conorii (strain ATCC VR-613 / Malish 7).